The primary structure comprises 263 residues: ATP synthase subunit delta (263 aa).

Belongs to the ATPase delta chain family. F-type ATPases have 2 components, F(1) - the catalytic core - and F(0) - the membrane proton channel. F(1) has five subunits: alpha(3), beta(3), gamma(1), delta(1), epsilon(1). F(0) has three main subunits: a(1), b(2) and c(10-14). The alpha and beta chains form an alternating ring which encloses part of the gamma chain. F(1) is attached to F(0) by a central stalk formed by the gamma and epsilon chains, while a peripheral stalk is formed by the delta and b chains.

It localises to the cell membrane. F(1)F(0) ATP synthase produces ATP from ADP in the presence of a proton or sodium gradient. F-type ATPases consist of two structural domains, F(1) containing the extramembraneous catalytic core and F(0) containing the membrane proton channel, linked together by a central stalk and a peripheral stalk. During catalysis, ATP synthesis in the catalytic domain of F(1) is coupled via a rotary mechanism of the central stalk subunits to proton translocation. Functionally, this protein is part of the stalk that links CF(0) to CF(1). It either transmits conformational changes from CF(0) to CF(1) or is implicated in proton conduction. The sequence is that of ATP synthase subunit delta from Cutibacterium acnes (strain DSM 16379 / KPA171202) (Propionibacterium acnes).